The primary structure comprises 488 residues: MEVTLSQGEYRLLKLMAERGFREGTLEEASKILGVDKSSLASLSNLLAEKGVVEVEERVEEHYVLTERGRDALERGLPEEKLVLFLAGRGGEASVEEVRRALGEEAGIALGQAARKGLVVIAGGVVRLAVDQAEALKTITPLKKLLENVASGSKPTVGDELLREALSRGLIRREARRSIVLRLKVNPAEALARARVEAAVLTRDMLKSGEWRRLRFKPYNVKAEPPRVLPARRHFLAEFIERLRDILRELGFREVRGPLVELELFNFDVLFQAQDHPAREIHDSLWIKSPRRGDLSGYSDLVERVASVHERGWKYRWSPEVASRYILRSQTTAVSARILATRPNPPARFFTVGKVFRSDAVGPTRLPEFHQLDGIEGDEGYTFRDLLGRLDEIASMLGLKLKFKPAYFPFTEPSVEGYVKLPNGRWLELFGAGMFRPEVLEAVGVDYPVGAWGFGIERLAMAFYGVSDIRKLYTRNVDEVREMRVRWL.

L-phenylalanine-binding positions include T332, 371-373 (QLD), and F410. E412 lines the Mg(2+) pocket. Residue F435 participates in L-phenylalanine binding.

This sequence belongs to the class-II aminoacyl-tRNA synthetase family. Phe-tRNA synthetase alpha subunit type 2 subfamily. In terms of assembly, tetramer of two alpha and two beta subunits. It depends on Mg(2+) as a cofactor.

The protein resides in the cytoplasm. The catalysed reaction is tRNA(Phe) + L-phenylalanine + ATP = L-phenylalanyl-tRNA(Phe) + AMP + diphosphate + H(+). In Aeropyrum pernix (strain ATCC 700893 / DSM 11879 / JCM 9820 / NBRC 100138 / K1), this protein is Phenylalanine--tRNA ligase alpha subunit.